A 365-amino-acid polypeptide reads, in one-letter code: Synapse-associated protein 1 (365 aa).

The interval 1–65 (MFGGLSSWLG…QPPTEDPQFL (65 aa)) is disordered. Residues 52 to 62 (EQQQQPPTEDP) are compositionally biased toward low complexity. Residues 172–224 (VQFNFDFDQMYPVALVMLQEDELLSKMRFALVPKLVKEEVFWRNYFYRISLIK) enclose the BSD domain. A disordered region spans residues 237 to 259 (QASGKEEKSSNRDDNLPLTEAVR). Over residues 240–251 (GKEEKSSNRDDN) the composition is skewed to basic and acidic residues. Residue T262 is modified to Phosphothreonine. Residues S283, S298, and S327 each carry the phosphoserine modification. The interval 344-365 (VAESEKRDENWDKEIEKMLQES) is disordered. Residues 346 to 365 (ESEKRDENWDKEIEKMLQES) show a composition bias toward basic and acidic residues.

Interacts (via phosphorylated form and BSD domain) with AKT1; this interaction is enhanced in a mTORC2-mediated manner in response to epidermal growth factor (EGF) stimulation and activates AKT1. In terms of processing, phosphorylated. Phosphorylation increases in a mTORC2-mediated manner in response to epidermal growth factor (EGF) stimulation. As to expression, expressed in the liver, kidney, skeletal muscle and in white and brown adipose tissues. Expressed in the cortex, cerebellum, thalamus, hippocampus, braistem, olfactory bulb, spinal cord and striatum of the brain. Expressed in most neuropil regions containing glutamatergic synaptic terminals. Expressed in the CA1, CA2 and CA3 perikarya of the hippocampus. Expressed in neurons and Purkinje cells (at the protein level).

The protein resides in the cytoplasm. The protein localises to the perinuclear region. Its subcellular location is the golgi apparatus. It is found in the perikaryon. It localises to the cell projection. The protein resides in the axon. The protein localises to the dendrite. Its subcellular location is the growth cone. It is found in the presynaptic cell membrane. It localises to the postsynaptic cell membrane. The protein resides in the membrane. In terms of biological role, plays a role in adipocyte differentiation by promoting mTORC2-mediated phosphorylation of AKT1 at 'Ser-473' after growth factor stimulation. The sequence is that of Synapse-associated protein 1 from Mus musculus (Mouse).